The following is a 196-amino-acid chain: Peptidyl-tRNA hydrolase (196 aa).

Tyr-17 is a binding site for tRNA. The active-site Proton acceptor is the His-22. Residues Phe-68, Asn-70, and Asn-116 each contribute to the tRNA site.

It belongs to the PTH family. In terms of assembly, monomer.

Its subcellular location is the cytoplasm. It carries out the reaction an N-acyl-L-alpha-aminoacyl-tRNA + H2O = an N-acyl-L-amino acid + a tRNA + H(+). Functionally, hydrolyzes ribosome-free peptidyl-tRNAs (with 1 or more amino acids incorporated), which drop off the ribosome during protein synthesis, or as a result of ribosome stalling. Its function is as follows. Catalyzes the release of premature peptidyl moieties from peptidyl-tRNA molecules trapped in stalled 50S ribosomal subunits, and thus maintains levels of free tRNAs and 50S ribosomes. This chain is Peptidyl-tRNA hydrolase, found in Photorhabdus laumondii subsp. laumondii (strain DSM 15139 / CIP 105565 / TT01) (Photorhabdus luminescens subsp. laumondii).